The chain runs to 234 residues: 2-C-methyl-D-erythritol 4-phosphate cytidylyltransferase (234 aa).

The protein belongs to the IspD/TarI cytidylyltransferase family. IspD subfamily.

It catalyses the reaction 2-C-methyl-D-erythritol 4-phosphate + CTP + H(+) = 4-CDP-2-C-methyl-D-erythritol + diphosphate. The protein operates within isoprenoid biosynthesis; isopentenyl diphosphate biosynthesis via DXP pathway; isopentenyl diphosphate from 1-deoxy-D-xylulose 5-phosphate: step 2/6. In terms of biological role, catalyzes the formation of 4-diphosphocytidyl-2-C-methyl-D-erythritol from CTP and 2-C-methyl-D-erythritol 4-phosphate (MEP). This is 2-C-methyl-D-erythritol 4-phosphate cytidylyltransferase from Pseudomonas aeruginosa (strain ATCC 15692 / DSM 22644 / CIP 104116 / JCM 14847 / LMG 12228 / 1C / PRS 101 / PAO1).